Consider the following 704-residue polypeptide: Structure-specific endonuclease subunit SLX1 homolog (704 aa).

The GIY-YIG domain maps to 4–90; it reads RFHCVYLLTS…TASARLRHTI (87 aa). 3 disordered regions span residues 157 to 180, 290 to 323, and 354 to 378; these read ESPR…ADGV, ASFA…RVRT, and GAAL…SRPP. Composition is skewed to polar residues over residues 161-175 and 311-320; these read VGTQ…SLQG and AGSSTPSPQR. An SLX1-type zinc finger spans residues 446-526; that stretch reads CSLCALPLQP…PSQPCPCPLC (81 aa). 2 disordered regions span residues 601–629 and 650–671; these read VPGA…SSPI and ASLA…GHSN. The segment covering 650–662 has biased composition (low complexity); sequence ASLAALSPTSASP.

The protein belongs to the SLX1 family. In terms of assembly, forms a heterodimer with a member of the SLX4 family. Requires a divalent metal cation as cofactor.

The protein resides in the nucleus. Catalytic subunit of a heterodimeric structure-specific endonuclease that resolves DNA secondary structures generated during DNA repair and recombination. Has endonuclease activity towards branched DNA substrates, introducing single-strand cuts in duplex DNA close to junctions with ss-DNA. The sequence is that of Structure-specific endonuclease subunit SLX1 homolog from Leishmania major.